We begin with the raw amino-acid sequence, 511 residues long: Probable Xaa-Pro aminopeptidase MAA_08947 (511 aa).

Residues Asp275, Asp286, Glu439, and Glu480 each coordinate Mn(2+).

This sequence belongs to the peptidase M24B family. Mn(2+) serves as cofactor.

It catalyses the reaction Release of any N-terminal amino acid, including proline, that is linked to proline, even from a dipeptide or tripeptide.. Functionally, catalyzes the removal of a penultimate prolyl residue from the N-termini of peptides. The chain is Probable Xaa-Pro aminopeptidase MAA_08947 from Metarhizium robertsii (strain ARSEF 23 / ATCC MYA-3075) (Metarhizium anisopliae (strain ARSEF 23)).